The primary structure comprises 121 residues: Large ribosomal subunit protein bL19 (121 aa).

The protein belongs to the bacterial ribosomal protein bL19 family.

This protein is located at the 30S-50S ribosomal subunit interface and may play a role in the structure and function of the aminoacyl-tRNA binding site. The protein is Large ribosomal subunit protein bL19 of Chlorobium phaeobacteroides (strain BS1).